The chain runs to 365 residues: Probable L-tyrosine/L-aspartate decarboxylase (365 aa).

Lys-224 carries the post-translational modification N6-(pyridoxal phosphate)lysine.

It belongs to the group II decarboxylase family. MfnA subfamily. It depends on pyridoxal 5'-phosphate as a cofactor.

The enzyme catalyses L-tyrosine + H(+) = tyramine + CO2. The catalysed reaction is L-aspartate + H(+) = beta-alanine + CO2. Its pathway is cofactor biosynthesis; methanofuran biosynthesis. It functions in the pathway cofactor biosynthesis; coenzyme A biosynthesis. Catalyzes the decarboxylation of L-tyrosine to produce tyramine for methanofuran biosynthesis. Can also catalyze the decarboxylation of L-aspartate to produce beta-alanine for coenzyme A (CoA) biosynthesis. The protein is Probable L-tyrosine/L-aspartate decarboxylase of Methanoculleus marisnigri (strain ATCC 35101 / DSM 1498 / JR1).